Consider the following 542-residue polypeptide: MALASIFAEFKGLAAGVSLDNINPLYVAGGILGAFTVYSIILVVYRLRFHPLTGFPGPKLLAATTWYEAYVDLIHHDFPERLAKIHEKYGRDFLTIKLIVVPRSPRFSGPIVRVSPHEIHVNDAEFFHTVFATEAKHRTNIIPPRGLGQEDSIGSTRSHDMHQLRRKPLDKFMGQRNIVRQQSMIHEEIRVLDQAMTSLKGNGKPVRLDCVFTSFTGDIVGRLACGEAPQLLQGKDFTPEWYDMIRGAARIIPVLRHFPQVGEITQKMPNWLVQALVPRSAGFRVLQMLGAERIARVRAEVADEKKGVEGGESMFHYLLRSDLPESEKISARLNAEATSFMGAGTYPTAATLIFVAYYILADPKIEARLKNDLKDVMANFDDEVPNWEKVEQVEYLQACIKEGLRLLRLFRRKARIATDIDLTYGGYVIPKGTPVSLSPYTMHMDPDVFPEPTKFKPERWLVEDLDPRMNRNLNPFLAGSRNCIGMHVAWAQMYLILATLFRPNKNYSLKLGECDESDVYPVVDNEFGVAKYDSRGLNALVV.

The chain crosses the membrane as a helical span at residues 25 to 45 (LYVAGGILGAFTVYSIILVVY). Residues 141–160 (IIPPRGLGQEDSIGSTRSHD) form a disordered region. A helical membrane pass occupies residues 340–360 (FMGAGTYPTAATLIFVAYYIL). Cysteine 483 contributes to the heme binding site. A glycan (N-linked (GlcNAc...) asparagine) is linked at asparagine 506.

This sequence belongs to the cytochrome P450 family. Heme serves as cofactor.

It is found in the membrane. It functions in the pathway antibiotic biosynthesis. Cytochrome P450 monooxygenase; part of the gene cluster that mediates the biosynthesis of sordarin and hypoxysordarin, glycoside antibiotics with a unique tetracyclic diterpene aglycone structure. First, the geranylgeranyl diphosphate synthase sdnC constructs GGDP from farnesyl diphosphate and isopentenyl diphosphate. The diterpene cyclase sdnA then catalyzes the cyclization of GGDP to afford cycloaraneosene. Cycloaraneosene is then hydroxylated four times by the putative cytochrome P450 monooxygenases sdnB, sdnE, sdnF and sdnH to give a hydroxylated cycloaraneosene derivative such as cycloaraneosene-8,9,13,19-tetraol. Although the order of the hydroxylations is unclear, at least C8, C9 and C13 of the cycloaraneosene skeleton are hydroxylated before the sordaricin formation. Dehydration of the 13-hydroxy group of the hydroxylated cycloaraneosene derivative might be catalyzed by an unassigned hypothetical protein such as sdnG and sdnP to construct the cyclopentadiene moiety. The FAD-dependent oxidoreductase sdnN is proposed to catalyze the oxidation at C9 of the hydroxylated cycloaraneosene derivative and also catalyze the Baeyer-Villiger oxidation to give the lactone intermediate. The presumed lactone intermediate would be hydrolyzed to give an acrolein moiety and a carboxylate moiety. Then, [4+2]cycloaddition would occur between the acrolein moiety and the cyclopentadiene moiety to give sordaricin. SdnN might also be involved in the [4+2]cycloaddition after the hypothesized oxidation to accommodate the oxidized product and prompt the [4+2]cycloaddition. GDP-6-deoxy-D-altrose may be biosynthesized from GDP-D-mannose by the putative GDP-mannose-4,6-dehydratase sdnI and the short-chain dehydrogenase sdnK. The glycosyltransferase sdnJ catalyzes the attachment of 6-deoxy-D-altrose onto the 19-hydroxy group of sordaricin to give 4'-O-demethylsordarin. The methyltransferase sdnD would complete the biosynthesis of sordarin. Sordarin can be further modified into hypoxysordarin. The unique acyl chain at the 3'-hydroxy group of hypoxysordarin would be constructed by an iterative type I PKS sdnO and the trans-acting polyketide methyltransferase sdnL. SdnL would be responsible for the introduction of an alpha-methyl group of the polyketide chain. Alternatively, the beta-lactamase-like protein sdnR might be responsible for the cleavage and transfer of the polyketide chain from the PKS sdnO to sordarin. Two putative cytochrome P450 monooxygenases, sdnQ and sdnT, might catalyze the epoxidations of the polyketide chain to complete the biosynthesis of hypoxysordarin. Transcriptional regulators sdnM and sdnS are presumably encoded for the transcriptional regulation of the expression of the sdn gene cluster. The chain is Cytochrome P450 monooxygenase sdnH from Sordaria araneosa (Pleurage araneosa).